The chain runs to 453 residues: Phosphoglucosamine mutase (453 aa).

S100 (phosphoserine intermediate) is an active-site residue. Mg(2+)-binding residues include S100, D239, D241, and D243. Residue S100 is modified to Phosphoserine.

It belongs to the phosphohexose mutase family. Requires Mg(2+) as cofactor. In terms of processing, activated by phosphorylation.

It catalyses the reaction alpha-D-glucosamine 1-phosphate = D-glucosamine 6-phosphate. Catalyzes the conversion of glucosamine-6-phosphate to glucosamine-1-phosphate. This chain is Phosphoglucosamine mutase, found in Buchnera aphidicola subsp. Baizongia pistaciae (strain Bp).